The sequence spans 84 residues: ATP synthase subunit c (84 aa).

Transmembrane regions (helical) follow at residues 9-29 and 57-77; these read LGLA…GCGI and ILGL…NLII.

It belongs to the ATPase C chain family. In terms of assembly, F-type ATPases have 2 components, F(1) - the catalytic core - and F(0) - the membrane proton channel. F(1) has five subunits: alpha(3), beta(3), gamma(1), delta(1), epsilon(1). F(0) has three main subunits: a(1), b(2) and c(10-14). The alpha and beta chains form an alternating ring which encloses part of the gamma chain. F(1) is attached to F(0) by a central stalk formed by the gamma and epsilon chains, while a peripheral stalk is formed by the delta and b chains.

It localises to the cell membrane. In terms of biological role, f(1)F(0) ATP synthase produces ATP from ADP in the presence of a proton or sodium gradient. F-type ATPases consist of two structural domains, F(1) containing the extramembraneous catalytic core and F(0) containing the membrane proton channel, linked together by a central stalk and a peripheral stalk. During catalysis, ATP synthesis in the catalytic domain of F(1) is coupled via a rotary mechanism of the central stalk subunits to proton translocation. Its function is as follows. Key component of the F(0) channel; it plays a direct role in translocation across the membrane. A homomeric c-ring of between 10-14 subunits forms the central stalk rotor element with the F(1) delta and epsilon subunits. In Lawsonia intracellularis (strain PHE/MN1-00), this protein is ATP synthase subunit c.